A 341-amino-acid chain; its full sequence is Fructose-1,6-bisphosphatase, cytosolic (341 aa).

The Mg(2+) site is built by E71, E100, D121, L123, and D124. Residues 124–127 (DGSF), N215, Y247, Y267, and K277 each bind substrate. A Mg(2+)-binding site is contributed by E283.

Belongs to the FBPase class 1 family. Mg(2+) is required as a cofactor.

Its subcellular location is the cytoplasm. It catalyses the reaction beta-D-fructose 1,6-bisphosphate + H2O = beta-D-fructose 6-phosphate + phosphate. This is Fructose-1,6-bisphosphatase, cytosolic from Pisum sativum (Garden pea).